The chain runs to 533 residues: Ribonuclease III domain-containing protein RNC1, chloroplastic (533 aa).

Residues 1 to 30 (MAPPAMAFQALALGPLPLPLPAARRRRRVR) constitute a chloroplast transit peptide. 2 disordered regions span residues 31 to 57 (VLAV…NSPS) and 66 to 85 (RKKA…ILKP). A compositionally biased stretch (pro residues) spans 39–53 (TPPPPPSPSSPPEPA). Positions 69 to 82 (AVSPKKKHPPRRFI) are enriched in basic residues. 2 consecutive RNase III domains span residues 164–279 (LLYL…LCFG) and 411–511 (EHPR…CVYG).

As to quaternary structure, interacts with RNA. Part of large ribonucleo-protein particles that contain CAF1 and/or CAF2.

The protein localises to the plastid. The protein resides in the chloroplast. Functionally, binds specific group II introns in chloroplasts and facilitates their splicing. Acts on both subgroup IIA and subgroup IIB introns. The substrates of the subgroup II also require the CRM domain proteins CAF1 or CAF2. Binds both single-stranded and double-stranded RNA non-specifically, but lacks endonuclease activity. Required for plastid ribosome biogenesis. This Oryza sativa subsp. japonica (Rice) protein is Ribonuclease III domain-containing protein RNC1, chloroplastic.